A 472-amino-acid chain; its full sequence is Adenosylhomocysteinase (472 aa).

3 residues coordinate substrate: Thr64, Asp138, and Glu198. 199 to 201 (TTT) contacts NAD(+). Substrate-binding residues include Lys228 and Asp232. Residues Asn233, 262–267 (GFGDVG), Glu285, Asn320, 341–343 (IGH), and Asn386 contribute to the NAD(+) site.

The protein belongs to the adenosylhomocysteinase family. NAD(+) serves as cofactor.

It localises to the cytoplasm. The catalysed reaction is S-adenosyl-L-homocysteine + H2O = L-homocysteine + adenosine. The protein operates within amino-acid biosynthesis; L-homocysteine biosynthesis; L-homocysteine from S-adenosyl-L-homocysteine: step 1/1. In terms of biological role, may play a key role in the regulation of the intracellular concentration of adenosylhomocysteine. The chain is Adenosylhomocysteinase from Prochlorococcus marinus (strain MIT 9301).